A 327-amino-acid polypeptide reads, in one-letter code: Poly(ribitol-phosphate) beta-N-acetylglucosaminyltransferase TarP (327 aa).

UDP-N-acetyl-alpha-D-glucosamine contacts are provided by residues Pro-9, Asp-41, Asn-68, Arg-76, and 92-94 (DSD). Residue Asp-94 coordinates Mn(2+). The Proton acceptor role is filled by Asp-181.

It belongs to the glycosyltransferase 2 family. In terms of assembly, homotrimer. It depends on Mn(2+) as a cofactor.

It carries out the reaction 4-O-[(D-ribitylphospho)(n)-di{(2R)-glycerylphospho}]-N-acetyl-beta-D-mannosaminyl-(1-&gt;4)-N-acetyl-alpha-D-glucosaminyl di-trans,octa-cis-undecaprenyl diphosphate + n UDP-N-acetyl-alpha-D-glucosamine = 4-O-([3-N-acetyl-beta-D-glucosaminyl-1-D-ribitylphospho](n)-di{[2R]-1-glycerylphospho})-N-acetyl-beta-D-mannosaminyl-(1-&gt;4)-N-acetyl-alpha-D-glucosaminyl di-trans,octa-cis-undecaprenyl diphosphate + n UDP + n H(+). Its pathway is cell wall biogenesis; poly(ribitol phosphate) teichoic acid biosynthesis. Functionally, attaches beta-O-GlcNAc (beta-O-N-acetyl-D-glucosamine) residues to the C3 position of poly(RboP)-wall teichoic acids (WTAs). Attenuates immunogenicity of WTA and protects S.aureus against adaptative host defenses by allowing bacteria to evade recognition by preexisting anti-S.aureus antibodies. Also protects the cell from podophage infection. This is Poly(ribitol-phosphate) beta-N-acetylglucosaminyltransferase TarP from Staphylococcus aureus (strain N315).